Reading from the N-terminus, the 285-residue chain is Putative pyruvate, phosphate dikinase regulatory protein (285 aa).

165-172 (GVSRTSKT) contributes to the ADP binding site.

This sequence belongs to the pyruvate, phosphate/water dikinase regulatory protein family. PDRP subfamily.

The catalysed reaction is N(tele)-phospho-L-histidyl/L-threonyl-[pyruvate, phosphate dikinase] + ADP = N(tele)-phospho-L-histidyl/O-phospho-L-threonyl-[pyruvate, phosphate dikinase] + AMP + H(+). The enzyme catalyses N(tele)-phospho-L-histidyl/O-phospho-L-threonyl-[pyruvate, phosphate dikinase] + phosphate + H(+) = N(tele)-phospho-L-histidyl/L-threonyl-[pyruvate, phosphate dikinase] + diphosphate. In terms of biological role, bifunctional serine/threonine kinase and phosphorylase involved in the regulation of the pyruvate, phosphate dikinase (PPDK) by catalyzing its phosphorylation/dephosphorylation. This chain is Putative pyruvate, phosphate dikinase regulatory protein, found in Lactobacillus delbrueckii subsp. bulgaricus (strain ATCC 11842 / DSM 20081 / BCRC 10696 / JCM 1002 / NBRC 13953 / NCIMB 11778 / NCTC 12712 / WDCM 00102 / Lb 14).